The sequence spans 463 residues: Nitrogenase vanadium-iron protein beta chain (463 aa).

Cys20, Cys45, Cys104, and Ser142 together coordinate [8Fe-7S] cluster.

The protein belongs to the NifD/NifK/NifE/NifN family. Hexamer of two alpha, two beta, and two delta chains. The cofactor is [8Fe-7S] cluster.

It catalyses the reaction N2 + 8 reduced [2Fe-2S]-[ferredoxin] + 16 ATP + 16 H2O = H2 + 8 oxidized [2Fe-2S]-[ferredoxin] + 2 NH4(+) + 16 ADP + 16 phosphate + 6 H(+). This vanadium-iron protein is part of the nitrogenase complex that catalyzes the key enzymatic reactions in nitrogen fixation. The polypeptide is Nitrogenase vanadium-iron protein beta chain (vnfK) (Trichormus variabilis (strain ATCC 29413 / PCC 7937) (Anabaena variabilis)).